We begin with the raw amino-acid sequence, 553 residues long: Replication factor C large subunit (553 aa).

50–57 lines the ATP pocket; that stretch reads GGPGVGKT. A disordered region spans residues 438-553; that stretch reads GKRPGKPEAG…SKKQRTLFDF (116 aa). Over residues 442 to 451 the composition is skewed to basic and acidic residues; it reads GKPEAGEPRE. Residues 503 to 513 are compositionally biased toward low complexity; sequence EAPMAAAMPAA. The span at 532 to 553 shows a compositional bias: basic and acidic residues; sequence EPEKPPAAEDKCSKKQRTLFDF.

This sequence belongs to the activator 1 small subunits family. RfcL subfamily. Heteromultimer composed of small subunits (RfcS) and large subunits (RfcL).

Its function is as follows. Part of the RFC clamp loader complex which loads the PCNA sliding clamp onto DNA. The sequence is that of Replication factor C large subunit from Methanocella arvoryzae (strain DSM 22066 / NBRC 105507 / MRE50).